We begin with the raw amino-acid sequence, 236 residues long: Syntaxin-8 (236 aa).

At 1-215 (MAPDPWFSTY…LVDRKSASCG (215 aa)) the chain is on the cytoplasmic side. The stretch at 42 to 65 (LTIRTLLKNLKVKIDLLKDLLLRA) forms a coiled coil. Residues Ser-102 and Ser-160 each carry the phosphoserine modification. In terms of domain architecture, t-SNARE coiled-coil homology spans 145-207 (QKIIQEQDAG…RTEARRVTLV (63 aa)). Residues 216 to 232 (MIMVILLLLVAIVVVAV) traverse the membrane as a helical; Anchor for type IV membrane protein segment. Residues 233 to 236 (WPTN) lie on the Vesicular side of the membrane.

This sequence belongs to the syntaxin family. In terms of assembly, part of the SNARE core complex containing STX7, VAMP8 and VTI1B. Interacts with VAMP8. Forms a SNARE complex with STX7, VTI1B and VAMP8 which functions in the homotypic fusion of late endosomes. Component of the SNARE complex composed of STX7, STX8, VAMP7 and VTI1B that is required for heterotypic fusion of late endosomes with lysosomes. Interacts with HECTD3. Interacts with TPC1. Post-translationally, ubiquitinated by HECTD3. In terms of tissue distribution, widely expressed in all tissues examined.

It is found in the membrane. Vesicle trafficking protein that functions in the early secretory pathway, possibly by mediating retrograde transport from cis-Golgi membranes to the ER. The polypeptide is Syntaxin-8 (Stx8) (Rattus norvegicus (Rat)).